The primary structure comprises 503 residues: Arabinose import ATP-binding protein AraG 1 (503 aa).

ABC transporter domains follow at residues 5–240 and 251–497; these read LRFD…MVGR and RALG…LPQT. 37 to 44 lines the ATP pocket; it reads GENGAGKS.

The protein belongs to the ABC transporter superfamily. Arabinose importer (TC 3.A.1.2.2) family. The complex is composed of two ATP-binding proteins (AraG), two transmembrane proteins (AraH) and a solute-binding protein (AraF).

The protein localises to the cell inner membrane. The enzyme catalyses L-arabinose(out) + ATP + H2O = L-arabinose(in) + ADP + phosphate + H(+). In terms of biological role, part of the ABC transporter complex AraFGH involved in arabinose import. Responsible for energy coupling to the transport system. This is Arabinose import ATP-binding protein AraG 1 from Burkholderia ambifaria (strain ATCC BAA-244 / DSM 16087 / CCUG 44356 / LMG 19182 / AMMD) (Burkholderia cepacia (strain AMMD)).